The following is a 372-amino-acid chain: Spermidine/putrescine import ATP-binding protein PotA (372 aa).

The region spanning 11–241 (IELRSITKSY…PANLFVARFI (231 aa)) is the ABC transporter domain. Residue 43-50 (GPSGCGKT) coordinates ATP.

The protein belongs to the ABC transporter superfamily. Spermidine/putrescine importer (TC 3.A.1.11.1) family. In terms of assembly, the complex is composed of two ATP-binding proteins (PotA), two transmembrane proteins (PotB and PotC) and a solute-binding protein (PotD).

It localises to the cell inner membrane. It carries out the reaction ATP + H2O + polyamine-[polyamine-binding protein]Side 1 = ADP + phosphate + polyamineSide 2 + [polyamine-binding protein]Side 1.. Functionally, part of the ABC transporter complex PotABCD involved in spermidine/putrescine import. Responsible for energy coupling to the transport system. In Aggregatibacter actinomycetemcomitans (Actinobacillus actinomycetemcomitans), this protein is Spermidine/putrescine import ATP-binding protein PotA.